A 385-amino-acid chain; its full sequence is MKETVVVAMSGGVDSSVTAALLLEQGYDVIGVTLQIWPKDAPEGAEGGCCSLSAVEDAKRVASKLGVPHYVLNFRDYFETEVIEYFGREYLAGQTPNPCIRCNRVIKFEGLLQKSLALGAAKVATGHYARIEQDSATGRYRLGRGIDANKDQSYALFNMTQEQLSRTLFPLGGFTKPEIREKAAQLGLAVASKPDSQEICFIPDNDYRRFLEERYPDHRFQPGPFVDQEGNVIGTHRGLPFYTVGQRKGLGVAFGFPAYVIALDVEHNAVVIGPDEAVKGRRLLADDLNWIDIAGLKAPMEVEAKIRYSASPAIAVISPVKDGSAVIVEFAAPQRAITPGQAVVFYRGDWVVGGGTIVRNLDLKLPEIRHPEPKPVKGVKAKGRV.

Residues 8-15 (AMSGGVDS) and leucine 34 contribute to the ATP site. The active-site Nucleophile is cysteine 102. Cysteine 102 and cysteine 200 are oxidised to a cystine. Glycine 126 provides a ligand contact to ATP. The segment at 150 to 152 (KDQ) is interaction with tRNA. The Cysteine persulfide intermediate role is filled by cysteine 200. Positions 307–308 (RY) are interaction with tRNA.

It belongs to the MnmA/TRMU family.

It localises to the cytoplasm. The catalysed reaction is S-sulfanyl-L-cysteinyl-[protein] + uridine(34) in tRNA + AH2 + ATP = 2-thiouridine(34) in tRNA + L-cysteinyl-[protein] + A + AMP + diphosphate + H(+). Catalyzes the 2-thiolation of uridine at the wobble position (U34) of tRNA, leading to the formation of s(2)U34. This Heliobacterium modesticaldum (strain ATCC 51547 / Ice1) protein is tRNA-specific 2-thiouridylase MnmA.